We begin with the raw amino-acid sequence, 402 residues long: Succinyl-diaminopimelate desuccinylase (402 aa).

His88 lines the Zn(2+) pocket. Asp90 is a catalytic residue. Asp121 contributes to the Zn(2+) binding site. The active-site Proton acceptor is the Glu155. Glu156, Glu184, and His374 together coordinate Zn(2+).

This sequence belongs to the peptidase M20A family. DapE subfamily. As to quaternary structure, homodimer. Zn(2+) is required as a cofactor. It depends on Co(2+) as a cofactor.

It catalyses the reaction N-succinyl-(2S,6S)-2,6-diaminopimelate + H2O = (2S,6S)-2,6-diaminopimelate + succinate. The protein operates within amino-acid biosynthesis; L-lysine biosynthesis via DAP pathway; LL-2,6-diaminopimelate from (S)-tetrahydrodipicolinate (succinylase route): step 3/3. Functionally, catalyzes the hydrolysis of N-succinyl-L,L-diaminopimelic acid (SDAP), forming succinate and LL-2,6-diaminopimelate (DAP), an intermediate involved in the bacterial biosynthesis of lysine and meso-diaminopimelic acid, an essential component of bacterial cell walls. This Psychrobacter sp. (strain PRwf-1) protein is Succinyl-diaminopimelate desuccinylase.